Reading from the N-terminus, the 179-residue chain is Large ribosomal subunit protein uL5 (179 aa).

This sequence belongs to the universal ribosomal protein uL5 family. In terms of assembly, part of the 50S ribosomal subunit; part of the 5S rRNA/L5/L18/L25 subcomplex. Contacts the 5S rRNA and the P site tRNA. Forms a bridge to the 30S subunit in the 70S ribosome.

In terms of biological role, this is one of the proteins that bind and probably mediate the attachment of the 5S RNA into the large ribosomal subunit, where it forms part of the central protuberance. In the 70S ribosome it contacts protein S13 of the 30S subunit (bridge B1b), connecting the 2 subunits; this bridge is implicated in subunit movement. Contacts the P site tRNA; the 5S rRNA and some of its associated proteins might help stabilize positioning of ribosome-bound tRNAs. The polypeptide is Large ribosomal subunit protein uL5 (Pelobacter propionicus (strain DSM 2379 / NBRC 103807 / OttBd1)).